Reading from the N-terminus, the 63-residue chain is uncharacterized protein (63 aa).

Residues 15–37 (ISHCHLPLSPATAIAIIICFRIV) form a helical membrane-spanning segment.

It localises to the membrane. This is an uncharacterized protein from Saccharomyces cerevisiae (strain ATCC 204508 / S288c) (Baker's yeast).